Here is a 250-residue protein sequence, read N- to C-terminus: Proteasome subunit alpha type-4-1 (250 aa).

Belongs to the peptidase T1A family. As to quaternary structure, the 26S proteasome consists of a 20S proteasome core and two 19S regulatory subunits. The 20S proteasome core is composed of 28 subunits that are arranged in four stacked rings, resulting in a barrel-shaped structure. The two end rings are each formed by seven alpha subunits, and the two central rings are each formed by seven beta subunits. The catalytic chamber with the active sites is on the inside of the barrel.

The protein resides in the cytoplasm. It is found in the nucleus. In terms of biological role, the proteasome is a multicatalytic proteinase complex which is characterized by its ability to cleave peptides with Arg, Phe, Tyr, Leu, and Glu adjacent to the leaving group at neutral or slightly basic pH. The proteasome has an ATP-dependent proteolytic activity. In Oryza sativa subsp. indica (Rice), this protein is Proteasome subunit alpha type-4-1.